The chain runs to 370 residues: Proline-rich protein 5-like (370 aa).

Ser28 carries the post-translational modification Phosphoserine. A disordered region spans residues 327–370; it reads PTFPPPHRQCSSEPSILDSPDEMELEDVASGSQEDSELNCASLS.

The protein belongs to the PROTOR family. As to quaternary structure, interacts with the mammalian target of rapamycin complex 2 (mTORC2) which contains MTOR, MLST8, PRR5, RICTOR, MAPKAP1 and DEPTOR. Interacts with RFFL. Interacts (via C-terminus) with ZFP36 (via C-terminus); this interaction may accelerate ZFP36-mediated mRNA decay during stress. Interacts with RICTOR. Post-translationally, ubiquitinated. Ubiquitination by RFFL promotes proteasomal degradation of PRR5L thereby modifying the substrate-specific activity of the mTORC2 complex. Ubiquitination by RFFL is stimulated by LPA/lysophosphatidic acid.

Its function is as follows. Associates with the mTORC2 complex that regulates cellular processes including survival and organization of the cytoskeleton. Regulates the activity of the mTORC2 complex in a substrate-specific manner preventing for instance the specific phosphorylation of PKCs and thereby controlling cell migration. Plays a role in the stimulation of ZFP36-mediated mRNA decay of several ZFP36-associated mRNAs, such as TNF-alpha and GM-CSF, in response to stress. Required for ZFP36 localization to cytoplasmic stress granule (SG) and P-body (PB) in response to stress. The protein is Proline-rich protein 5-like (Prr5l) of Rattus norvegicus (Rat).